The primary structure comprises 129 residues: RxLR effector protein SFI6 (129 aa).

The first 16 residues, 1-16 (MTLVVLATGLLASGTA), serve as a signal peptide directing secretion. The RxLR-dEER motif lies at 42–64 (RFLRSHQITDDKVEINEHGEEER).

This sequence belongs to the RxLR effector family.

The protein resides in the secreted. It localises to the host cytoplasm. It is found in the host cell membrane. Its function is as follows. Effector that suppresses flg22-induced post-translational MAP kinase activation in tomato but not in Arabidopsis. The perception of highly conserved pathogen- or microbe-associated molecular patterns (PAMPs/MAMPs), such as flg22, triggers converging signaling pathways recruiting MAP kinase cascades and inducing transcriptional re-programming, yielding a generic antimicrobial response. This chain is RxLR effector protein SFI6, found in Phytophthora infestans (strain T30-4) (Potato late blight agent).